Reading from the N-terminus, the 376-residue chain is 1-acyl-sn-glycerol-3-phosphate acyltransferase 3 (376 aa).

2 helical membrane-spanning segments follow: residues 14–34 (VLFL…FIIV) and 49–69 (VAEL…CIKI). Positions 92 to 97 (HRSDID) match the HXXXXD motif motif. 3 consecutive transmembrane segments (helical) span residues 98 to 118 (WLIG…LAIM), 306 to 326 (LIVV…LLQW), and 335 to 355 (IILL…ILIQ).

This sequence belongs to the 1-acyl-sn-glycerol-3-phosphate acyltransferase family. Predominantly expressed in pollen.

It is found in the membrane. It carries out the reaction a 1-acyl-sn-glycero-3-phosphate + an acyl-CoA = a 1,2-diacyl-sn-glycero-3-phosphate + CoA. The protein operates within phospholipid metabolism; CDP-diacylglycerol biosynthesis; CDP-diacylglycerol from sn-glycerol 3-phosphate: step 2/3. Its function is as follows. Converts lysophosphatidic acid (LPA) into phosphatidic acid by incorporating acyl moiety at the 2 position. Has preference for C-18-CoA substrates compared to C-16-CoA substrates. The polypeptide is 1-acyl-sn-glycerol-3-phosphate acyltransferase 3 (LPAT3) (Arabidopsis thaliana (Mouse-ear cress)).